We begin with the raw amino-acid sequence, 359 residues long: N-acetylneuraminate-9-phosphate synthase (359 aa).

Residues K61, K74, and K79 each carry the N6-acetyllysine modification. Position 275 is a phosphoserine (S275). K290 is modified (N6-acetyllysine). The AFP-like domain occupies S294–H353.

In terms of tissue distribution, ubiquitous.

It is found in the cytoplasm. The catalysed reaction is aldehydo-N-acetyl-D-mannosamine 6-phosphate + phosphoenolpyruvate + H2O = N-acetylneuraminate 9-phosphate + phosphate. Catalyzes condensation of phosphoenolpyruvate (PEP) and N-acetylmannosamine 6-phosphate (ManNAc-6-P) to synthesize N-acetylneuraminate-9-phosphate (Neu5Ac-9-P). Neu5Ac-9-P is the phosphorylated forms of sialic acid N-acetylneuraminic acid (Neu5Ac). In contrast with human ortholog, has no detectable activity towards D-mannose 6-phosphate. The sequence is that of N-acetylneuraminate-9-phosphate synthase from Mus musculus (Mouse).